We begin with the raw amino-acid sequence, 351 residues long: Dihydroorotate dehydrogenase (quinone) (351 aa).

Residues 61–65 (AGLDK) and Thr85 each bind FMN. Substrate is bound at residue Lys65. 110-114 (NRMGF) serves as a coordination point for substrate. FMN is bound by residues Asn139 and Asn172. Asn172 lines the substrate pocket. Residue Ser175 is the Nucleophile of the active site. Asn177 is a binding site for substrate. FMN contacts are provided by Lys217 and Thr245. 246–247 (NT) serves as a coordination point for substrate. Residues Gly268, Gly297, and 318–319 (YS) contribute to the FMN site.

It belongs to the dihydroorotate dehydrogenase family. Type 2 subfamily. Monomer. It depends on FMN as a cofactor.

Its subcellular location is the cell membrane. The catalysed reaction is (S)-dihydroorotate + a quinone = orotate + a quinol. The protein operates within pyrimidine metabolism; UMP biosynthesis via de novo pathway; orotate from (S)-dihydroorotate (quinone route): step 1/1. Catalyzes the conversion of dihydroorotate to orotate with quinone as electron acceptor. This Xanthomonas oryzae pv. oryzae (strain MAFF 311018) protein is Dihydroorotate dehydrogenase (quinone).